We begin with the raw amino-acid sequence, 223 residues long: 2-C-methyl-D-erythritol 4-phosphate cytidylyltransferase (223 aa).

The protein belongs to the IspD/TarI cytidylyltransferase family. IspD subfamily.

The catalysed reaction is 2-C-methyl-D-erythritol 4-phosphate + CTP + H(+) = 4-CDP-2-C-methyl-D-erythritol + diphosphate. It functions in the pathway isoprenoid biosynthesis; isopentenyl diphosphate biosynthesis via DXP pathway; isopentenyl diphosphate from 1-deoxy-D-xylulose 5-phosphate: step 2/6. Functionally, catalyzes the formation of 4-diphosphocytidyl-2-C-methyl-D-erythritol from CTP and 2-C-methyl-D-erythritol 4-phosphate (MEP). In Prochlorococcus marinus (strain MIT 9301), this protein is 2-C-methyl-D-erythritol 4-phosphate cytidylyltransferase.